A 139-amino-acid chain; its full sequence is Acidic phospholipase A2 Tgc-E6 (139 aa).

The first 16 residues, 1-16 (MRTLWIMAVLLLGVEG), serve as a signal peptide directing secretion. Intrachain disulfides connect Cys-42/Cys-132, Cys-44/Cys-60, Cys-59/Cys-111, Cys-65/Cys-139, Cys-66/Cys-104, Cys-73/Cys-97, and Cys-91/Cys-102. The Ca(2+) site is built by Tyr-43, Gly-45, and Gly-47. Residue His-63 is part of the active site. Asp-64 contacts Ca(2+). Asp-105 is a catalytic residue.

The protein belongs to the phospholipase A2 family. Group II subfamily. D49 sub-subfamily. Monomer. The cofactor is Ca(2+). As to expression, expressed by the venom gland.

It is found in the secreted. The catalysed reaction is a 1,2-diacyl-sn-glycero-3-phosphocholine + H2O = a 1-acyl-sn-glycero-3-phosphocholine + a fatty acid + H(+). Functionally, snake venom phospholipase A2 (PLA2) that inhibits the ADP-(IC(50)=272 nM) and collagen-induced (IC(50)=518 nM) human platelet aggregation in platelet rich plasma. Exhibits very high hydrolytic activities toward the synthetic lecithin, and prefers the anionic micelles (dPPC with deoxycholate) to the zwitterionic micelles (dPPC with Triton X-100). PLA2 catalyzes the calcium-dependent hydrolysis of the 2-acyl groups in 3-sn-phosphoglycerides. The polypeptide is Acidic phospholipase A2 Tgc-E6 (Trimeresurus gracilis (Kikuchi habu)).